Consider the following 125-residue polypeptide: Cystatin-like cysteine protease inhibitor EPIC2B (125 aa).

An N-terminal signal peptide occupies residues 1 to 21 (MSFLRPTLALLAVTALVTTSG). An N-linked (GlcNAc...) asparagine glycan is attached at N45. Residues 68-72 (QVVSG) carry the Secondary area of contact motif.

It belongs to the cystatin family. In terms of assembly, interacts with the host papain-like cysteine protease PIP1. Interacts with the host papain-like cysteine protease RCR3. Interacts with the host papain-like cysteine protease C14.

The protein resides in the secreted. In terms of biological role, secreted effector that interacts with and inhibits the pathogenesis-related papain-like cysteine proteases C14, PIP1 and RCR3 of host plants. Inhibition of host proteases by a pathogen extracellular protease inhibitor forms a specific type of defense-counterdefense mechanism between plants and microbial pathogens. The polypeptide is Cystatin-like cysteine protease inhibitor EPIC2B (Phytophthora infestans (Potato late blight agent)).